We begin with the raw amino-acid sequence, 395 residues long: Ribosomal RNA small subunit methyltransferase H (395 aa).

S-adenosyl-L-methionine is bound by residues 101–103 (GGH), D120, Y147, D171, and Q178.

This sequence belongs to the methyltransferase superfamily. RsmH family.

The protein resides in the cytoplasm. The catalysed reaction is cytidine(1402) in 16S rRNA + S-adenosyl-L-methionine = N(4)-methylcytidine(1402) in 16S rRNA + S-adenosyl-L-homocysteine + H(+). Functionally, specifically methylates the N4 position of cytidine in position 1402 (C1402) of 16S rRNA. This is Ribosomal RNA small subunit methyltransferase H from Mycobacterium marinum (strain ATCC BAA-535 / M).